The primary structure comprises 492 residues: PTS system N-acetylmuramic acid-specific EIIBC component (492 aa).

The PTS EIIB type-1 domain occupies 1 to 89 (MAKINQSVIA…NELLNSSTPT (89 aa)). Residue C28 is the Phosphocysteine intermediate; for EIIB activity of the active site. The 365-residue stretch at 123–487 (TKFATIFTPL…KKIEVLKADV (365 aa)) folds into the PTS EIIC type-1 domain. Helical transmembrane passes span 125-145 (FATI…LLGF), 167-187 (IIGY…ILIG), 193-213 (AFGG…LSYN), 227-247 (FFGY…AAIL), 265-285 (MILT…IFIM), 311-331 (ILAG…FVPV), 344-364 (LFPI…ALYV), 378-398 (GAII…VTLP), 403-423 (FITA…IAYL), and 450-470 (IFVG…SGFV).

Its subcellular location is the cell inner membrane. It carries out the reaction N-acetyl-beta-D-muramate(out) + N(pros)-phospho-L-histidyl-[protein] = N-acetyl-beta-D-muramate 6-phosphate(in) + L-histidyl-[protein]. Its function is as follows. The phosphoenolpyruvate-dependent sugar phosphotransferase system (sugar PTS), a major carbohydrate active transport system, catalyzes the phosphorylation of incoming sugar substrates concomitantly with their translocation across the cell membrane. This system is involved in N-acetylmuramic acid (MurNAc) transport, yielding cytoplasmic MurNAc-6-P. Is also able to take up anhydro-N-acetylmuramic acid (anhMurNAc), but cannot phosphorylate the carbon 6, probably because of the 1,6-anhydro ring. In Photorhabdus laumondii subsp. laumondii (strain DSM 15139 / CIP 105565 / TT01) (Photorhabdus luminescens subsp. laumondii), this protein is PTS system N-acetylmuramic acid-specific EIIBC component (murP).